A 652-amino-acid polypeptide reads, in one-letter code: Set1 complex component ash2 (652 aa).

The segment at 1–32 is disordered; the sequence is MLAHGSNDYGVSLKGNKTGSSPSKASSLNWNE. The span at 15 to 32 shows a compositional bias: polar residues; sequence GNKTGSSPSKASSLNWNE. Residues 40-94 form a PHD-type zinc finger; sequence NTYCYCGKDRNLRFPDLQCSVCLNMFHLSCLSPPCTSMMGFSTNYQFVCKHCTED. Zn(2+) is bound by residues Cys-43, Cys-45, Cys-58, Cys-61, His-66, Cys-69, Cys-88, and Cys-91. The disordered stretch occupies residues 234 to 270; it reads RLVETETPPPSSSKLKEDYKDSKREMKRSNTPWSNAS. Over residues 247-261 the composition is skewed to basic and acidic residues; the sequence is KLKEDYKDSKREMKR. One can recognise a B30.2/SPRY domain in the interval 330 to 519; it reads EAAKDLPNVM…KHNRYIDLPY (190 aa).

It belongs to the cclA family. Component of the Set1 complex composed of ash2, sdc1, set1, shg1, spp1, swd1, swd2 and swd3. Component of the Lid2 complex composed of ash2, jmj3, lid2, sdc1 and snt2.

Its subcellular location is the nucleus. Its function is as follows. Component of the COMPASS (Set1C) complex that specifically mono-, di- and trimethylates histone H3 to form H3K4me1/2/3, which subsequently plays a role in telomere length maintenance and transcription elongation regulation. Regulates MAPK pathway and sporulation through H3K4 methylation. The chain is Set1 complex component ash2 from Schizosaccharomyces pombe (strain 972 / ATCC 24843) (Fission yeast).